A 169-amino-acid chain; its full sequence is MQFRVGLGKKKYRIKPRAEQKNKFWIGGVEIEDSKYIYDHDASDDASDVIQLAVADALFGATALGDGQIVFNKEKTQIPLKGNPRKEAPRILARTYNFIRKNWYINNIDITLEIPSQQKMDDYKHAIFDFICTALRITELTINLKVREPLNPNEISCLAVVLVERQRLK.

This is an uncharacterized protein from Mycoplasma pneumoniae (strain ATCC 29342 / M129 / Subtype 1) (Mycoplasmoides pneumoniae).